The chain runs to 513 residues: GMP synthase [glutamine-hydrolyzing] (513 aa).

The Glutamine amidotransferase type-1 domain occupies 9–198; sequence LILVLDFGSQ…VRRVCECKGQ (190 aa). C86 functions as the Nucleophile in the catalytic mechanism. Catalysis depends on residues H172 and E174. One can recognise a GMPS ATP-PPase domain in the interval 199–388; sequence WTMENFIEIE…LGIPEHLVWR (190 aa). An ATP-binding site is contributed by 226-232; sequence SGGVDSS.

In terms of assembly, homodimer.

The enzyme catalyses XMP + L-glutamine + ATP + H2O = GMP + L-glutamate + AMP + diphosphate + 2 H(+). The protein operates within purine metabolism; GMP biosynthesis; GMP from XMP (L-Gln route): step 1/1. Its function is as follows. Catalyzes the synthesis of GMP from XMP. The sequence is that of GMP synthase [glutamine-hydrolyzing] from Staphylococcus aureus (strain MSSA476).